The primary structure comprises 331 residues: Protein FLX-like 1 (331 aa).

The interval 1–51 is disordered; that stretch reads MSGRNRGPPPPSMKGGSYSGLQAPVHQPPFVRGLGGGPVPPPPHPSMIDDS. A coiled-coil region spans residues 69–252; that stretch reads ILEDRLAAQN…AEIANSETSA (184 aa). Positions 306 to 321 are enriched in low complexity; the sequence is QAAWAGGYDPQQQQQQ. The segment at 306–331 is disordered; sequence QAAWAGGYDPQQQQQQQPPPQGQGHR. The span at 322-331 shows a compositional bias: pro residues; that stretch reads QPPPQGQGHR.

Belongs to the FLX family. In terms of assembly, interacts with FRI.

Functionally, has no transcriptional activation activity. This Arabidopsis thaliana (Mouse-ear cress) protein is Protein FLX-like 1 (FLXL1).